A 228-amino-acid polypeptide reads, in one-letter code: Response regulator MprA (228 aa).

One can recognise a Response regulatory domain in the interval 2–116; that stretch reads RILAVDDDRA…ELLARIRALL (115 aa). At Asp-46 the chain carries 4-aspartylphosphate. The ompR/PhoB-type DNA-binding region spans 127 to 225; sequence SVAMSFSDLT…VRGVGYVLRE (99 aa).

Post-translationally, phosphorylated and dephosphorylated by MprB.

The protein resides in the cytoplasm. In terms of biological role, member of the two-component regulatory system MprB/MprA which contributes to maintaining a balance among several systems involved in stress resistance and is required for establishment and maintenance of persistent infection in the host. Functions as a transcriptional regulator that recognizes a 19-bp nucleotide motif comprizing two loosely conserved 8-bp direct DNA-binding motif repeats separated by a 3-bp spacer region. This chain is Response regulator MprA (mprA), found in Mycobacterium leprae (strain TN).